The chain runs to 351 residues: ABC transporter nucleoside-binding protein BmpA (351 aa).

Residues 1 to 21 (MKKRVIAVSAIALASVAVLAG) form the signal peptide. C22 carries the N-palmitoyl cysteine lipid modification. The S-diacylglycerol cysteine moiety is linked to residue C22.

This sequence belongs to the BMP lipoprotein family. As to quaternary structure, the complex is composed of two ATP-binding proteins (NupA), two transmembrane proteins (NupB and NupC) and a solute-binding protein (BmpA).

It localises to the cell membrane. Its function is as follows. Part of an ABC transporter complex involved in the uptake of all common nucleosides. The sequence is that of ABC transporter nucleoside-binding protein BmpA from Lactococcus lactis subsp. cremoris (strain MG1363).